Reading from the N-terminus, the 230-residue chain is MDPDTVKSTLSNLAFGNVLAAAARDYKKEVLANEKAQGSRPVNEEVDLDELMDDPELEKLHADRIAALRREVEKREAFKRQGHGEYREVSEGDFLGEVTRSEKVICHFYHKEFYRCKIMDKHLKTLAPRHVDTKFIKMDAENAPFFVTKLAIKTLPCVILFSKGIAMDRLVGFQDLGAKDDFSTTKLENLLVKKGMLSEKRKEEDEEDYEYQESIRRSVRSSANVDSDSD.

The Thioredoxin domain maps to 89-173 (VSEGDFLGEV…GIAMDRLVGF (85 aa)). Residues 199–230 (EKRKEEDEEDYEYQESIRRSVRSSANVDSDSD) are disordered. The segment covering 220-230 (RSSANVDSDSD) has biased composition (polar residues).

It belongs to the phosducin family. In terms of assembly, interacts with TUBB2, TUBB3, TUBB4 and TUBB5. As to expression, expressed in roots, cotyledons, leaves, stems and flowers.

It localises to the cytoplasm. The protein localises to the nucleus. Tubulin-binding protein involved in microtubule formation. The protein is Thioredoxin domain-containing protein PLP3B (PLP3B) of Arabidopsis thaliana (Mouse-ear cress).